We begin with the raw amino-acid sequence, 299 residues long: Delta-9 desaturase-like 5 protein (299 aa).

2 helical membrane-spanning segments follow: residues 31–51 (ADII…LAPF) and 55–75 (WEAL…ITFS). The Histidine box-1 signature appears at 77 to 82 (HRNLAH). The Histidine box-2 motif lies at 114–118 (HRFHH). The next 2 helical transmembrane spans lie at 174 to 194 (IGFH…LPYL) and 199 to 219 (GVGG…CHIW). Positions 246 to 250 (HNNHH) match the Histidine box-3 motif.

Belongs to the fatty acid desaturase type 1 family. The cofactor is Fe cation.

It is found in the endoplasmic reticulum membrane. It participates in lipid metabolism; polyunsaturated fatty acid biosynthesis. In Arabidopsis thaliana (Mouse-ear cress), this protein is Delta-9 desaturase-like 5 protein.